Reading from the N-terminus, the 283-residue chain is ATP phosphoribosyltransferase (283 aa).

It belongs to the ATP phosphoribosyltransferase family. Long subfamily. It depends on Mg(2+) as a cofactor.

It localises to the cytoplasm. It carries out the reaction 1-(5-phospho-beta-D-ribosyl)-ATP + diphosphate = 5-phospho-alpha-D-ribose 1-diphosphate + ATP. It participates in amino-acid biosynthesis; L-histidine biosynthesis; L-histidine from 5-phospho-alpha-D-ribose 1-diphosphate: step 1/9. Feedback inhibited by histidine. Catalyzes the condensation of ATP and 5-phosphoribose 1-diphosphate to form N'-(5'-phosphoribosyl)-ATP (PR-ATP). Has a crucial role in the pathway because the rate of histidine biosynthesis seems to be controlled primarily by regulation of HisG enzymatic activity. The sequence is that of ATP phosphoribosyltransferase from Bacteroides fragilis (strain ATCC 25285 / DSM 2151 / CCUG 4856 / JCM 11019 / LMG 10263 / NCTC 9343 / Onslow / VPI 2553 / EN-2).